We begin with the raw amino-acid sequence, 335 residues long: MLRKLVTGALAAALLLSGQSNAQNACQQTQQLSGGRTINNKNETGNGNGNYKYEIWRDGNGGSLTLYPKDAAFKASWNNSGDFLGRVGLTFNKPAATNLGGDLIANYNYKKSGSDGGTYSYIGIYGWMDNPQIEYYVVDDWMHNRGAPGGSYMGSQKGTITVDGGTYKVWSGQRTGASKWGTSTFTQIFSIRTSPRQCGSINVSEHFRQWQKLGLRLGGLMEAQLLAESGGGSGYVDFTYATITIGGSSSNASAPSNNNNNNNNNNDNNGNWNNWNNNNNNNNNNNNNNNNNNNNQGGGNCAAIWGQCGGSGYNGPKCCKQGSCKQINQWYSQCQ.

The first 22 residues, 1 to 22 (MLRKLVTGALAAALLLSGQSNA), serve as a signal peptide directing secretion. The 203-residue stretch at 39–241 (NNKNETGNGN…GSGYVDFTYA (203 aa)) folds into the GH11 domain. Residues Asn-42 and Asn-78 are each glycosylated (N-linked (GlcNAc...) asparagine). The active-site Nucleophile is the Glu-134. Asn-202 carries N-linked (GlcNAc...) asparagine glycosylation. The active-site Proton donor is Glu-228. Residue Asn-251 is glycosylated (N-linked (GlcNAc...) asparagine). Residues 251–291 (NASAPSNNNNNNNNNNDNNGNWNNWNNNNNNNNNNNNNNNN) form a disordered region. Residues 257–291 (NNNNNNNNNNDNNGNWNNWNNNNNNNNNNNNNNNN) show a composition bias toward low complexity. Positions 300–335 (NCAAIWGQCGGSGYNGPKCCKQGSCKQINQWYSQCQ) constitute a CBM1 domain.

It belongs to the glycosyl hydrolase 11 (cellulase G) family.

Its subcellular location is the secreted. It catalyses the reaction Endohydrolysis of (1-&gt;4)-beta-D-xylosidic linkages in xylans.. It participates in glycan degradation; xylan degradation. Its function is as follows. Endo-1,4-beta-xylanase involved in the hydrolysis of xylan, a major structural heterogeneous polysaccharide found in plant biomass representing the second most abundant polysaccharide in the biosphere, after cellulose. This is Endo-1,4-beta-xylanase S20 (xynS20) from Neocallimastix patriciarum (Rumen fungus).